The chain runs to 321 residues: MAKGLLIVNLGSPVSPETKDVRRYLREFLSDQNVITMPKALWQPILRGFILPFRSWRSATFYKHEWTQAGSPLIAYTQVTRDRLRERLPDWDVQMAMNYGGEYPIGETLQTMAARGDAPIVVIPLFPEYTQSTTKTILDKVAASGVKTVVIDRFYDHSDYQKILAQQIDDAYEAGAYDTVILSYHGIPTAMVRHGDPYQQECETTTAGVKQYLKKVPQTKVEMCYQSKFGPVPWLKPYLRNRLMELAALGKRNVLVATPSFVADCLETLEENNVQNYQTFRANGGKNFATVRPMNGCEPFCDFLAKLAEDKIAAEANHGKA.

2 residues coordinate Fe(2+): His185 and Glu267.

The protein belongs to the ferrochelatase family.

Its subcellular location is the cytoplasm. It carries out the reaction Fe-coproporphyrin III + 2 H(+) = coproporphyrin III + Fe(2+). It participates in porphyrin-containing compound metabolism; protoheme biosynthesis. Functionally, involved in coproporphyrin-dependent heme b biosynthesis. Catalyzes the insertion of ferrous iron into coproporphyrin III to form Fe-coproporphyrin III. This Lacticaseibacillus paracasei (strain ATCC 334 / BCRC 17002 / CCUG 31169 / CIP 107868 / KCTC 3260 / NRRL B-441) (Lactobacillus paracasei) protein is Coproporphyrin III ferrochelatase.